The chain runs to 290 residues: MGPDSTLALGEGAVRGRLELGVCLRGGRSVASRQFHEGALRVLRPHYLDESGQVGYVMVNPGGAYLGADLFLIDVTVENNAALLLTTQSATKVYRTPGSFAEQRMSVRLGEGSRLELMPDQLIAYREASYRQNSRISLHPTSSLIMAEVITPGWSPDGASFKYQEVRLRNEIWIDDENGAKLLALDNLLIRPPLGDVTGMGFMEGFSHLGSLVVVDPRVNQGLADELDLIARDFDAYTGMSLTATIAGSTGLVLRSLSNSTEELNNLLGACAGVLRERWYGQAPLNLRKY.

It belongs to the UreD family. UreD, UreF and UreG form a complex that acts as a GTP-hydrolysis-dependent molecular chaperone, activating the urease apoprotein by helping to assemble the nickel containing metallocenter of UreC. The UreE protein probably delivers the nickel.

The protein localises to the cytoplasm. In terms of biological role, required for maturation of urease via the functional incorporation of the urease nickel metallocenter. The chain is Urease accessory protein UreD from Paenarthrobacter aurescens (strain TC1).